A 178-amino-acid polypeptide reads, in one-letter code: Inorganic pyrophosphatase (178 aa).

3 residues coordinate substrate: Lys-30, Arg-44, and Tyr-56. Positions 66, 71, and 103 each coordinate Mg(2+). Residue Tyr-142 coordinates substrate.

It belongs to the PPase family. Homohexamer. It depends on Mg(2+) as a cofactor.

It localises to the cytoplasm. The catalysed reaction is diphosphate + H2O = 2 phosphate + H(+). Its function is as follows. Catalyzes the hydrolysis of inorganic pyrophosphate (PPi) forming two phosphate ions. In Xanthomonas campestris pv. campestris (strain ATCC 33913 / DSM 3586 / NCPPB 528 / LMG 568 / P 25), this protein is Inorganic pyrophosphatase.